A 423-amino-acid chain; its full sequence is Glucoside xylosyltransferase 2 (423 aa).

The Cytoplasmic segment spans residues 1–6 (MRFRWK). A helical; Signal-anchor for type II membrane protein transmembrane segment spans residues 7 to 26 (FFGSLLCVTGLLLVLYRQLG). Topologically, residues 27 to 423 (NVPQPPPGPA…RVVVHIRSDV (397 aa)) are lumenal. The segment at 60 to 85 (RRDARQGGKKKTNWNNVRAPEQKPNP) is disordered. 2 N-linked (GlcNAc...) asparagine glycosylation sites follow: Asn215 and Asn256.

Belongs to the glycosyltransferase 8 family.

It localises to the membrane. It catalyses the reaction 3-O-(beta-D-glucosyl)-L-seryl-[EGF-like domain protein] + UDP-alpha-D-xylose = 3-O-[alpha-D-xylosyl-(1-&gt;3)-beta-D-glucosyl]-L-seryl-[EGF-like domain protein] + UDP + H(+). In terms of biological role, glycosyltransferase which elongates the O-linked glucose attached to EGF-like repeats in the extracellular domain of Notch proteins by catalyzing the addition of xylose. This Xenopus laevis (African clawed frog) protein is Glucoside xylosyltransferase 2 (gxylt2).